The primary structure comprises 68 residues: U19-ctenitoxin-Pn1a (68 aa).

Glutamine 1 carries the pyrrolidone carboxylic acid modification. 5 cysteine pairs are disulfide-bonded: cysteine 8–cysteine 19, cysteine 13–cysteine 28, cysteine 18–cysteine 51, cysteine 38–cysteine 59, and cysteine 53–cysteine 65.

In terms of tissue distribution, expressed by the venom gland.

Its subcellular location is the secreted. Functionally, non-toxic to mice and insects. In Phoneutria nigriventer (Brazilian armed spider), this protein is U19-ctenitoxin-Pn1a.